Reading from the N-terminus, the 554-residue chain is MTDVKKSIRAGRGTELECLGWEQEAVLRMLRNNLDPEVAEKPEDLIVYGGIGKAARNWDAFHAIERSLKMLKDDETLLIQSGKPVGLFRTHSRAPRVLLANSVLVPKWADWEHFHDLEKKGLMMYGQMTAGSWIYIGSQGILQGTYETFAELARQHFGGSLKGTLTLTAGLGGMGGAQPLSVTMNDGVVIAVEADETRIDKRIETNYCDRKTASIDEALRWAEAARQAGEPLSIGLLGNAAEVHHELLNRGVHIDIVTDQTSAHDPLIGYIPAGYSLEEADRLRRDQPELYVRLSKQSMKKHVEAMLAFKKKGAVVFDYGNNIRQAAKDEGLADAFDFPGFVPAYIRPLFCEGKGPFRWAALSGDPEDIYRTDALLKELFPENQALHRWIDMAQKKVTFQGLPSRICWLGYGEREKMGLAINELVRNGELKAPIVIGRDHLDCGSVASPNRETEAMKDGSDAVGDWAVLNALINTASGASWVSFHHGGGVGMGYSLHAGMVAVADGSILAEQRLSRVLTSDPGMGIIRHADAGYEKAAQVAEEQDIMIPMKKER.

NAD(+) is bound by residues 49–50, Q127, 173–175, E193, R198, 239–240, 260–264, 270–271, and Y319; these read GG, GMG, NA, QTSAH, and YI. Residue C407 is part of the active site. G489 contributes to the NAD(+) binding site.

The protein belongs to the urocanase family. It depends on NAD(+) as a cofactor.

Its subcellular location is the cytoplasm. It catalyses the reaction 4-imidazolone-5-propanoate = trans-urocanate + H2O. The protein operates within amino-acid degradation; L-histidine degradation into L-glutamate; N-formimidoyl-L-glutamate from L-histidine: step 2/3. Functionally, catalyzes the conversion of urocanate to 4-imidazolone-5-propionate. The sequence is that of Urocanate hydratase from Bacillus velezensis (strain DSM 23117 / BGSC 10A6 / LMG 26770 / FZB42) (Bacillus amyloliquefaciens subsp. plantarum).